Reading from the N-terminus, the 875-residue chain is Probable inorganic carbon transporter subunit DabA (875 aa).

4 residues coordinate Zn(2+): Cys-399, Asp-401, His-581, and Cys-596.

This sequence belongs to the inorganic carbon transporter (TC 9.A.2) DabA family. As to quaternary structure, forms a complex with DabB. Zn(2+) is required as a cofactor.

Its subcellular location is the cell membrane. Part of an energy-coupled inorganic carbon pump. The protein is Probable inorganic carbon transporter subunit DabA of Bacillus thuringiensis (strain Al Hakam).